Here is a 248-residue protein sequence, read N- to C-terminus: 14-3-3 protein sigma (248 aa).

Phosphoserine is present on residues Ser-5, Ser-74, and Ser-248.

It belongs to the 14-3-3 family. In terms of assembly, homodimer. Interacts with KRT17 and SAMSN1. Found in a complex with XPO7, EIF4A1, ARHGAP1, VPS26A, VPS29 and VPS35. Interacts with GAB2. Interacts with SRPK2. Interacts with COPS6. Interacts with COP1; this interaction leads to proteasomal degradation. Interacts with the 'Thr-369' phosphorylated form of DAPK2. Interacts with PI4KB. Interacts with SLITRK1. Interacts with LRRK2; this interaction is dependent on LRRK2 phosphorylation. Interacts with PKP3 (via N-terminus); the interaction maintains the cytoplasmic pool of PKP3, facilitates PKP3 exchange at desmosomes and restricts PKP3 localization to existing desmosome cell junctions. Interacts with LCP2. Ubiquitinated. Ubiquitination by RFFL induces proteasomal degradation and indirectly regulates p53/TP53 activation. As to expression, expressed in dorsal skin (at protein level). Expressed in the basal layer of skin epithelium and in outer root sheath of hair follicle.

Its subcellular location is the cytoplasm. It is found in the nucleus. The protein localises to the secreted. In terms of biological role, adapter protein implicated in the regulation of a large spectrum of both general and specialized signaling pathways. Binds to a large number of partners, usually by recognition of a phosphoserine or phosphothreonine motif. Binding generally results in the modulation of the activity of the binding partner. Promotes cytosolic retention of GBP1 GTPase by binding to phosphorylated GBP1, thereby inhibiting the innate immune response. Also acts as a TP53/p53-regulated inhibitor of G2/M progression. When bound to KRT17, regulates protein synthesis and epithelial cell growth by stimulating Akt/mTOR pathway. Acts to maintain desmosome cell junction adhesion in epithelial cells via interacting with and sequestering PKP3 to the cytoplasm, thereby restricting its translocation to existing desmosome structures and therefore maintaining desmosome protein homeostasis. Also acts to facilitate PKP3 exchange at desmosome plaques, thereby maintaining keratinocyte intercellular adhesion. May also regulate MDM2 autoubiquitination and degradation and thereby activate p53/TP53. The sequence is that of 14-3-3 protein sigma (Sfn) from Mus musculus (Mouse).